Reading from the N-terminus, the 517-residue chain is ATP synthase subunit beta (517 aa).

167–174 (GGAGVGKT) serves as a coordination point for ATP. Composition is skewed to basic and acidic residues over residues 475–484 (AESMGAKMDD) and 495–508 (DSKDKGKGDSKADD). Positions 475-517 (AESMGAKMDDGGSDGAPPPSDSKDKGKGDSKADDKGDDADKDA) are disordered.

It belongs to the ATPase alpha/beta chains family. As to quaternary structure, F-type ATPases have 2 components, CF(1) - the catalytic core - and CF(0) - the membrane proton channel. CF(1) has five subunits: alpha(3), beta(3), gamma(1), delta(1), epsilon(1). CF(0) has three main subunits: a(1), b(2) and c(9-12). The alpha and beta chains form an alternating ring which encloses part of the gamma chain. CF(1) is attached to CF(0) by a central stalk formed by the gamma and epsilon chains, while a peripheral stalk is formed by the delta and b chains.

Its subcellular location is the cell membrane. The enzyme catalyses ATP + H2O + 4 H(+)(in) = ADP + phosphate + 5 H(+)(out). Its function is as follows. Produces ATP from ADP in the presence of a proton gradient across the membrane. The catalytic sites are hosted primarily by the beta subunits. This chain is ATP synthase subunit beta, found in Mycobacterium sp. (strain JLS).